The sequence spans 568 residues: Zinc finger protein 76 (568 aa).

A Glycyl lysine isopeptide (Lys-Gly) (interchain with G-Cter in SUMO2) cross-link involves residue Lys24. A run of 3 repeats spans residues Ile34–His45, Val62–His73, and Val88–His99. Residues Ile34–His99 are 3 X 12 AA approximate repeats. 7 C2H2-type zinc fingers span residues Phe165 to His189, Tyr195 to His219, Tyr225 to His249, Phe255 to His279, Tyr285 to His309, Tyr315 to His339, and Tyr345 to His368. Positions Arg365 to Thr402 are disordered. Positions Gln379–Glu395 are enriched in low complexity.

The protein belongs to the krueppel C2H2-type zinc-finger protein family.

The protein resides in the nucleus. Its function is as follows. May be involved in transcriptional regulation. This chain is Zinc finger protein 76 (Znf76), found in Mus musculus (Mouse).